The chain runs to 354 residues: Ornithine transcarbamylase, mitochondrial (354 aa).

The transit peptide at 1–32 (MLSNLRILLNNAALRKGHTSVVRHFWCGKPVQ) directs the protein to the mitochondrion. The residue at position 70 (Lys70) is an N6-acetyllysine; alternate. At Lys70 the chain carries N6-succinyllysine; alternate. Lys80 carries the post-translational modification N6-succinyllysine. Lys88 carries the post-translational modification N6-acetyllysine; alternate. Position 88 is an N6-succinyllysine; alternate (Lys88). 90-94 (STRTR) serves as a coordination point for carbamoyl phosphate. A Phosphoserine modification is found at Ser133. Arg141 is a carbamoyl phosphate binding site. Arg141 is a binding site for L-ornithine. An N6-acetyllysine; alternate modification is found at Lys144. N6-succinyllysine; alternate is present on Lys144. Position 168 (His168) interacts with carbamoyl phosphate. Asn199 serves as a coordination point for L-ornithine. Residues Lys221, Lys231, and Lys238 each carry the N6-acetyllysine; alternate modification. N6-succinyllysine; alternate occurs at positions 221, 231, and 238. An N6-acetyllysine modification is found at Lys243. An L-ornithine-binding site is contributed by 263 to 267 (DTWIS). An N6-succinyllysine mark is found at Lys274 and Lys289. At Lys292 the chain carries N6-acetyllysine; alternate. At Lys292 the chain carries N6-succinyllysine; alternate. Residue 302 to 305 (HCLP) participates in L-ornithine binding. Cys303 is an active-site residue. Lys307 carries the N6-acetyllysine; alternate modification. Lys307 is modified (N6-succinyllysine; alternate). Arg330 contacts carbamoyl phosphate. Arg330 contacts L-ornithine.

This sequence belongs to the aspartate/ornithine carbamoyltransferase superfamily. OTCase family. As to quaternary structure, homotrimer. Acetylation at Lys-88 negatively regulates ornithine carbamoyltransferase activity in response to nutrient signals.

Its subcellular location is the mitochondrion matrix. It catalyses the reaction carbamoyl phosphate + L-ornithine = L-citrulline + phosphate + H(+). Its pathway is nitrogen metabolism; urea cycle; L-citrulline from L-ornithine and carbamoyl phosphate: step 1/1. Its activity is regulated as follows. Negatively regulated by lysine acetylation. Catalyzes the second step of the urea cycle, the condensation of carbamoyl phosphate with L-ornithine to form L-citrulline. The urea cycle ensures the detoxification of ammonia by converting it to urea for excretion. The protein is Ornithine transcarbamylase, mitochondrial of Mus musculus (Mouse).